A 329-amino-acid polypeptide reads, in one-letter code: Prostaglandin reductase 1 (329 aa).

At T18 the chain carries Phosphothreonine. Position 20 is a phosphoserine (S20). NADP(+) contacts are provided by residues 152 to 155 (GAVG), K178, Y193, N217, 239 to 245 (CGAISTY), 270 to 272 (FIV), and N321. Position 178 is an N6-(2-hydroxyisobutyryl)lysine; alternate (K178). K178 bears the N6-acetyllysine; alternate mark.

The protein belongs to the NADP-dependent oxidoreductase L4BD family. In terms of assembly, monomer or homodimer. As to expression, ubiquitously distributed in various tissues and leukocytes, the kidney and liver had the highest enzyme activities.

Its subcellular location is the cytoplasm. It carries out the reaction 13,14-dihydro-15-oxo-prostaglandin E1 + NADP(+) = 15-oxoprostaglandin E1 + NADPH + H(+). The enzyme catalyses 13,14-dihydro-15-oxo-prostaglandin E2 + NADP(+) = 15-oxoprostaglandin E2 + NADPH + H(+). It catalyses the reaction 13,14-dihydro-15-oxo-prostaglandin E2 + NAD(+) = 15-oxoprostaglandin E2 + NADH + H(+). The catalysed reaction is 13,14-dihydro-15-oxo-prostaglandin F1alpha + NADP(+) = 15-oxoprostaglandin F1alpha + NADPH + H(+). It carries out the reaction 13,14-dihydro-15-oxo-PGF2alpha + NADP(+) = 15-oxoprostaglandin F2alpha + NADPH + H(+). The enzyme catalyses leukotriene B4 + NADP(+) = 12-oxo-leukotriene B4 + NADPH + H(+). It catalyses the reaction 20-hydroxy-leukotriene B4 + NADP(+) = 12-oxo-20-hydroxy-leukotriene B4 + NADPH + H(+). The catalysed reaction is 6-trans-leukotriene B4 + NADP(+) = 12-oxo-(5S)-hydroxy-(6E,8E,10E,14Z)-eicosatetraenoate + NADPH + H(+). It carries out the reaction (5S,12S)-dihydroxy-(6E,10E,12E,14Z)-eicosatetraenoate + NADP(+) = 12-oxo-(5S)-hydroxy-(6E,8E,10E,14Z)-eicosatetraenoate + NADPH + H(+). The enzyme catalyses 15-oxo-(5S,6R)-dihydroxy-(7E,9E,11Z,13E)-eicosatetraenoate + NADH + H(+) = 15-oxo-(5S,6R)-dihydroxy-(7E,9E,11Z)-eicosatrienoate + NAD(+). It catalyses the reaction an n-alkanal + NADP(+) = an alk-2-enal + NADPH + H(+). The catalysed reaction is hexanal + NADP(+) = (E)-hex-2-enal + NADPH + H(+). It carries out the reaction octanal + NADP(+) = (2E)-octenal + NADPH + H(+). The enzyme catalyses decanal + NADP(+) = (2E)-decenal + NADPH + H(+). It catalyses the reaction dodecanal + NADP(+) = (2E)-dodecenal + NADPH + H(+). The catalysed reaction is 4-hydroxynonanal + NADP(+) = (E)-4-hydroxynon-2-enal + NADPH + H(+). It carries out the reaction pentan-2-one + NADP(+) = (E)-pent-3-en-2-one + NADPH + H(+). The enzyme catalyses nonan-2-one + NADP(+) = (3E)-nonen-2-one + NADPH + H(+). Down-regulated by nonsteroidal anti-inflammatory drugs diclofenac, indomethacin and niflumic acid. NAD(P)H-dependent oxidoreductase involved in metabolic inactivation of pro- and anti-inflammatory eicosanoids: prostaglandins (PG), leukotrienes (LT) and lipoxins (LX). Preferentially uses NADPH over NADH as cofactor. Catalyzes with high efficiency the reduction of the 13,14 double bond of 15-oxoPGs, including 15-oxo-PGE1, 15-oxo-PGE2, 15-oxo-PGF1-alpha and 15-oxo-PGF2-alpha. Catalyzes with lower efficiency the oxidation of the hydroxyl group at C12 of LTB4 and its derivatives, converting them into biologically less active 12-oxo-LTB4 metabolites. Reduces 15-oxo-LXA4 to 13,14 dihydro-15-oxo-LXA4 and may promote neutrophil recruitment at the inflammatory site. Plays a role in metabolic detoxification of alkenals and ketones. Reduces alpha,beta-unsaturated alkenals and ketones, particularly those with medium-chain length, showing highest affinity toward (2E)-decenal and (3E)-3-nonen-2-one. May inactivate 4-hydroxy-2-nonenal, a cytotoxic lipid constituent of oxidized low-density lipoprotein particles. This Sus scrofa (Pig) protein is Prostaglandin reductase 1 (PTGR1).